A 313-amino-acid polypeptide reads, in one-letter code: Protein FixB (313 aa).

FAD is bound at residue 255 to 283; it reads LYLAVGISGQIQHMVGANASQTIFAINKD.

Belongs to the ETF alpha-subunit/FixB family. As to quaternary structure, heterodimer of FixA and FixB.

It participates in amine and polyamine metabolism; carnitine metabolism. Required for anaerobic carnitine reduction. May bring reductant to CaiA. The sequence is that of Protein FixB from Escherichia coli (strain 55989 / EAEC).